Reading from the N-terminus, the 432-residue chain is Succinate--CoA ligase [GDP-forming] subunit beta, mitochondrial (432 aa).

Residues 1-37 (MAAPVGAQARKLLRDLVLRPPLLAARSQVVQLTSRRW) constitute a mitochondrion transit peptide. The ATP-grasp domain maps to 46-274 (KKLMSDNGVK…NAEFRQKDIF (229 aa)). Glutamine 57 is a binding site for GTP. Lysine 73 bears the N6-acetyllysine mark. An N6-succinyllysine modification is found at lysine 78. 90–92 (GRG) is a GTP binding site. 3 positions are modified to N6-acetyllysine: lysine 111, lysine 132, and lysine 139. Residue leucine 146 coordinates GTP. Residue serine 161 is modified to Phosphoserine. N6-acetyllysine occurs at positions 200, 218, and 227. Mg(2+) is bound by residues asparagine 243 and aspartate 257. Position 271 is an N6-acetyllysine (lysine 271). Asparagine 308 lines the substrate pocket. Lysine 338 carries the N6-succinyllysine modification. Lysine 347 is modified (N6-acetyllysine). 365–367 (GIV) is a substrate binding site. An N6-acetyllysine mark is found at lysine 386 and lysine 423.

It belongs to the succinate/malate CoA ligase beta subunit family. GTP-specific subunit beta subfamily. As to quaternary structure, heterodimer of an alpha and a beta subunit. The beta subunit determines specificity for GTP. Requires Mg(2+) as cofactor.

Its subcellular location is the mitochondrion. The catalysed reaction is GTP + succinate + CoA = succinyl-CoA + GDP + phosphate. The protein operates within carbohydrate metabolism; tricarboxylic acid cycle; succinate from succinyl-CoA (ligase route): step 1/1. Its function is as follows. GTP-specific succinyl-CoA synthetase functions in the citric acid cycle (TCA), coupling the hydrolysis of succinyl-CoA to the synthesis of GTP and thus represents the only step of substrate-level phosphorylation in the TCA. The beta subunit provides nucleotide specificity of the enzyme and binds the substrate succinate, while the binding sites for coenzyme A and phosphate are found in the alpha subunit. This Bos taurus (Bovine) protein is Succinate--CoA ligase [GDP-forming] subunit beta, mitochondrial.